The primary structure comprises 497 residues: Cytochrome P450 71A16 (497 aa).

The chain crosses the membrane as a helical span at residues 1–21 (MEMMILISLCLTTFLTILLFF). Cys-439 is a heme binding site.

The protein belongs to the cytochrome P450 family. Requires heme as cofactor.

The protein localises to the membrane. Its function is as follows. Possesses triterpene oxidizing activity. Catalyzes the C23 hydroxylation of marneral to form 23-hydroxymarneral. Catalyzes the C23 hydroxylation of marnerol to form 23-hydroxymarnerol. This Arabidopsis thaliana (Mouse-ear cress) protein is Cytochrome P450 71A16 (CYP71A16).